The primary structure comprises 579 residues: Mycobactin import ATP-binding/permease protein IrtB (579 aa).

Residues 1-16 (MIRTWIALVPNDHRAR) lie on the Cytoplasmic side of the membrane. Residues 17–37 (LIGFALLAFCSVVARAVGTVL) form a helical membrane-spanning segment. An ABC transmembrane type-1 domain is found at 17–299 (LIGFALLAFC…VSELAPALES (283 aa)). Residues 38-52 (LVPLMAALFGEAPQR) are Periplasmic-facing. The chain crosses the membrane as a helical span at residues 53–73 (AWLWLGWLSAATVAGWVLDAV). The Cytoplasmic portion of the chain corresponds to 74-123 (TARIGIELGFAVLNHTQHDVADRLPVVRLDWFTAENTATARQAIAATGPE). A helical membrane pass occupies residues 124–146 (LVGLVVNLVTPLTSAILLPAVIA). Over 147-155 (LALLPISWQ) the chain is Periplasmic. Residues 156-178 (LGVAALAGVPLLLGALWASAAFA) form a helical membrane-spanning segment. Over 179–237 (RRADTAADKANTALTERIIEFARTQQALRAARRVEPARSLVGNALASQHTATMRLLGMQ) the chain is Cytoplasmic. The helical transmembrane segment at 238-258 (IPGQLLFSIASQLALIVLAGT) threads the bilayer. Over 259-579 (TAALTITGTL…EAAEWQILAE (321 aa)) the chain is Periplasmic. The ABC transporter domain maps to 332–567 (IEFDDVAFGY…GGRFSQFWRQ (236 aa)). 366–373 (GPSGCGKS) contacts ATP.

Belongs to the ABC transporter superfamily. Siderophore-Fe(3+) uptake transporter (SIUT) (TC 3.A.1.21) family. In terms of assembly, forms a heterodimer with IrtA.

The protein resides in the cell inner membrane. Functionally, part of the ABC transporter complex IrtAB involved in the import of iron-bound mycobactin (Fe-MBT) and carboxymycobactin (Fe-cMBT). Transmembrane domains (TMD) form a pore in the membrane and the ATP-binding domain (NBD) is responsible for energy generation. This Mycobacterium bovis (strain ATCC BAA-935 / AF2122/97) protein is Mycobactin import ATP-binding/permease protein IrtB (irtB).